Reading from the N-terminus, the 406-residue chain is MRVLVVNCGSSSIKYQFLDMDTEQVLCKGLAERIGIPGSRIVHKKDDQKVVVEKPMKDHEDALKYVLELVVDEKVGGVKDLKEIDAVGHRVVHGGEKFSGSVLIDEEVMRALEEYSYLAPLHNPPNIMGIRAMMKLLPGVPNVAVFDTAFHSKMPAKAYLYAIPYEYYKKYKIRRYGFHGTSHRYVSKRTAEILGLDYHKSKIITVHLGNGASIAAVMNGHSIDTSMGFTPLEGLVMGTRSGDIDPSIVTFLMEKEGLTAEEVYTILNKKSGVLGLTDGFSSDMRDIEGKALEGDPVCRLALDIYEYRIAKYIGAYIAAMNGVDAIAFTAGVGENSPITRKEICENYLSYLGIKIDDEKNNVKGEERIITTPDSKVKVLLVPTNEELMIARDTKEIIEKGLKQLEY.

Asn7 provides a ligand contact to Mg(2+). Lys14 provides a ligand contact to ATP. A substrate-binding site is contributed by Arg90. The Proton donor/acceptor role is filled by Asp147. ATP is bound by residues 207–211 (HLGNG), 283–285 (DMR), and 331–335 (GVGEN). Position 385 (Glu385) interacts with Mg(2+).

The protein belongs to the acetokinase family. As to quaternary structure, homodimer. It depends on Mg(2+) as a cofactor. Mn(2+) is required as a cofactor.

It is found in the cytoplasm. It catalyses the reaction acetate + ATP = acetyl phosphate + ADP. The protein operates within metabolic intermediate biosynthesis; acetyl-CoA biosynthesis; acetyl-CoA from acetate: step 1/2. Functionally, catalyzes the formation of acetyl phosphate from acetate and ATP. Can also catalyze the reverse reaction. This is Acetate kinase from Fervidobacterium nodosum (strain ATCC 35602 / DSM 5306 / Rt17-B1).